A 537-amino-acid polypeptide reads, in one-letter code: uncharacterized protein (537 aa).

This is an uncharacterized protein from Bacillus subtilis (strain 168).